A 122-amino-acid chain; its full sequence is Large ribosomal subunit protein uL14 (122 aa).

This sequence belongs to the universal ribosomal protein uL14 family. Part of the 50S ribosomal subunit. Forms a cluster with proteins L3 and L19. In the 70S ribosome, L14 and L19 interact and together make contacts with the 16S rRNA in bridges B5 and B8.

Functionally, binds to 23S rRNA. Forms part of two intersubunit bridges in the 70S ribosome. The polypeptide is Large ribosomal subunit protein uL14 (Mycolicibacterium vanbaalenii (strain DSM 7251 / JCM 13017 / BCRC 16820 / KCTC 9966 / NRRL B-24157 / PYR-1) (Mycobacterium vanbaalenii)).